Here is a 231-residue protein sequence, read N- to C-terminus: Peroxisomal membrane protein 11E (231 aa).

Over 1-91 (MTTLDLTRAE…LPLVLLGKSK (91 aa)) the chain is Cytoplasmic. The chain crosses the membrane as a helical span at residues 92–108 (NALLSTFLFLDQIVWLG). The Lumenal portion of the chain corresponds to 109–202 (RSGIYKNKER…LLQLAPKTIS (94 aa)). The chain crosses the membrane as a helical span at residues 203 to 222 (PRVTGAFGFTTSLISCYQLL). Residues 223–231 (PSRPKLKTP) lie on the Cytoplasmic side of the membrane.

Belongs to the peroxin-11 family. As to quaternary structure, homooligomer. Interacts with ARC5 and FIS1B on peroxisomes. In terms of tissue distribution, expressed in leaves and developing siliques.

The protein resides in the peroxisome membrane. In terms of biological role, involved in peroxisomal proliferation. Promotes peroxisomal duplication, aggregation or elongation without fission. The chain is Peroxisomal membrane protein 11E (PEX11E) from Arabidopsis thaliana (Mouse-ear cress).